The primary structure comprises 170 residues: Inducible metalloproteinase inhibitor protein (170 aa).

Residues Met1–Ser19 form the signal peptide. N-linked (GlcNAc...) asparagine glycosylation is found at Asn48 and Asn149.

Cleaved. In terms of processing, five disulfide bonds are present. When artificially cleaved by thermolysin between Asn-56 and Ile-57, the two obtained chains (called heavy and light chains) remain linked. Post-translationally, the N-terminus is blocked.

In terms of biological role, inhibits thermolysin, bacillolysin and pseudolysin, B.polymyxa metalloprotease and human MMP1 and MMP3. No activity on trypsin or cysteine protease papain. The sequence is that of Inducible metalloproteinase inhibitor protein (IMPI) from Galleria mellonella (Greater wax moth).